A 217-amino-acid polypeptide reads, in one-letter code: External core antigen (217 aa).

An N-terminal signal peptide occupies residues 1 to 19; the sequence is MYLFHLCLVFACVPCPTFQ. The segment at 26 to 28 is HBEAG; that stretch reads GWL. Positions 180–217 are disordered; the sequence is RRGGARASRSPRRRTPSPRRRRSQSPRRRRSQSPSANC. Positions 188–210 are enriched in basic residues; the sequence is RSPRRRTPSPRRRRSQSPRRRRS. The stretch at 189 to 195 is one 1; half-length repeat; that stretch reads SPRRRTP. Residues 189–211 are 3 X 8 AA repeats of S-P-R-R-R-R-S-Q; sequence SPRRRTPSPRRRRSQSPRRRRSQ. Residues 189-217 constitute a propeptide that is removed on maturation; that stretch reads SPRRRTPSPRRRRSQSPRRRRSQSPSANC. Tandem repeats lie at residues 196 to 203 and 204 to 211.

Belongs to the orthohepadnavirus precore antigen family. As to quaternary structure, homodimerizes. Phosphorylated. In terms of processing, cleaved by host furin.

It localises to the secreted. Its subcellular location is the host nucleus. In terms of biological role, may regulate immune response to the intracellular capsid in acting as a T-cell tolerogen, by having an immunoregulatory effect which prevents destruction of infected cells by cytotoxic T-cells. This immune regulation may predispose to chronicity during perinatal infections and prevent severe liver injury during adult infections. This Marmota monax (Woodchuck) protein is External core antigen.